The sequence spans 321 residues: Nucleotide-binding protein LI0459 (321 aa).

41–48 (GMSGAGKS) provides a ligand contact to ATP.

The protein belongs to the RapZ-like family.

In terms of biological role, displays ATPase and GTPase activities. The protein is Nucleotide-binding protein LI0459 of Lawsonia intracellularis (strain PHE/MN1-00).